The following is a 108-amino-acid chain: Nucleoid-associated protein BPP1222 (108 aa).

The interval 86-108 (TSQEKMASVTAGMPLPPGMKLPF) is disordered. Residues 99 to 108 (PLPPGMKLPF) are compositionally biased toward pro residues.

The protein belongs to the YbaB/EbfC family. In terms of assembly, homodimer.

It is found in the cytoplasm. The protein resides in the nucleoid. Its function is as follows. Binds to DNA and alters its conformation. May be involved in regulation of gene expression, nucleoid organization and DNA protection. The chain is Nucleoid-associated protein BPP1222 from Bordetella parapertussis (strain 12822 / ATCC BAA-587 / NCTC 13253).